Here is a 505-residue protein sequence, read N- to C-terminus: MNLRPEEISSIIQEQIKRYENKLEVKDVGTVIQVGDAIARIHGLEKCMAGELLEFPGGVYGMALNLEEDNVGCVLLGSDDKIKEGDTVKRTGRIVEVPVGEALLGRVVNSLGQPIDGKGPIQTDKYRDIERVAPGIIARKSVHEPLQTGIKAIDSMIPIGRGQRELIIGDRQTGKTAIAIDTIINQKHSDVICIYVAIGQKKSTVSQIQDTLEKNGAMEYTIIVASTASELAPLQYIAPYAGCAMGEEFMENGKHVLIIYDDLSKHAVAYRAMSLLLRRPPGREAYPGDVFYLHSRLLERAAKLSDERGGGSLTALPLIETQAGDVSAYIPTNVISITDGQIFLESELFYSGVRPAVNPGISVSRVGGNAQIKAMKKVAGTLRLELAQYRELAAFAQFGSELDKETQARLAQGERIIEMLKQPQFKPMPVEEQVMMIYAITNKYLTDIEVVEIGPFESQFISYMVGHHAEVGQAIRDNGVLDQASETTLKEAIEAFKKQFKAERE.

Residue 169-176 (GDRQTGKT) coordinates ATP.

It belongs to the ATPase alpha/beta chains family. In terms of assembly, F-type ATPases have 2 components, CF(1) - the catalytic core - and CF(0) - the membrane proton channel. CF(1) has five subunits: alpha(3), beta(3), gamma(1), delta(1), epsilon(1). CF(0) has three main subunits: a(1), b(2) and c(9-12). The alpha and beta chains form an alternating ring which encloses part of the gamma chain. CF(1) is attached to CF(0) by a central stalk formed by the gamma and epsilon chains, while a peripheral stalk is formed by the delta and b chains.

The protein localises to the cell membrane. The enzyme catalyses ATP + H2O + 4 H(+)(in) = ADP + phosphate + 5 H(+)(out). Produces ATP from ADP in the presence of a proton gradient across the membrane. The alpha chain is a regulatory subunit. The polypeptide is ATP synthase subunit alpha (Alkaliphilus metalliredigens (strain QYMF)).